The sequence spans 88 residues: Elongation factor 1-beta (88 aa).

It belongs to the EF-1-beta/EF-1-delta family.

In terms of biological role, promotes the exchange of GDP for GTP in EF-1-alpha/GDP, thus allowing the regeneration of EF-1-alpha/GTP that could then be used to form the ternary complex EF-1-alpha/GTP/AAtRNA. In Haloarcula marismortui (strain ATCC 43049 / DSM 3752 / JCM 8966 / VKM B-1809) (Halobacterium marismortui), this protein is Elongation factor 1-beta.